Consider the following 459-residue polypeptide: N-chimaerin (459 aa).

At A2 the chain carries N-acetylalanine. Residues 49–135 (EYHGMISREE…IETKAAEYIA (87 aa)) enclose the SH2 domain. Residue T192 is modified to Phosphothreonine. The segment at 205 to 255 (VHNFKVHTFRGPHWCEYCANFMWGLIAQGVKCADCGLNVHKQCSKMVPNDC) adopts a Phorbol-ester/DAG-type zinc-finger fold. In terms of domain architecture, Rho-GAP spans 268-459 (CDLTTLVKAH…LLIKNEDILF (192 aa)). T340 bears the Phosphothreonine mark.

Interacts with EPHA4; effector of EPHA4 in axon guidance linking EPHA4 activation to RAC1 regulation. May also interact with EPHB1 and EPHB2. In terms of processing, phosphorylated. Phosphorylation is EPHA4 kinase activity-dependent.

In terms of biological role, GTPase-activating protein for p21-rac and a phorbol ester receptor. May play an important role in neuronal signal-transduction mechanisms. Involved in the assembly of neuronal locomotor circuits as a direct effector of EPHA4 in axon guidance. The chain is N-chimaerin (Chn1) from Mus musculus (Mouse).